A 162-amino-acid polypeptide reads, in one-letter code: SsrA-binding protein (162 aa).

The segment at 140-162 is disordered; it reads EDRRHDIKERETKREMDRAMRRR.

Belongs to the SmpB family.

The protein resides in the cytoplasm. Required for rescue of stalled ribosomes mediated by trans-translation. Binds to transfer-messenger RNA (tmRNA), required for stable association of tmRNA with ribosomes. tmRNA and SmpB together mimic tRNA shape, replacing the anticodon stem-loop with SmpB. tmRNA is encoded by the ssrA gene; the 2 termini fold to resemble tRNA(Ala) and it encodes a 'tag peptide', a short internal open reading frame. During trans-translation Ala-aminoacylated tmRNA acts like a tRNA, entering the A-site of stalled ribosomes, displacing the stalled mRNA. The ribosome then switches to translate the ORF on the tmRNA; the nascent peptide is terminated with the 'tag peptide' encoded by the tmRNA and targeted for degradation. The ribosome is freed to recommence translation, which seems to be the essential function of trans-translation. The chain is SsrA-binding protein from Myxococcus xanthus (strain DK1622).